Here is a 319-residue protein sequence, read N- to C-terminus: ATP-dependent 6-phosphofructokinase (319 aa).

Gly-11 contacts ATP. An ADP-binding site is contributed by 21 to 25; it reads RAVVR. Residues 72–73 and 102–105 contribute to the ATP site; these read RC and GEGS. Glu-103 contributes to the Mg(2+) binding site. 126–128 serves as a coordination point for substrate; sequence TID. The active-site Proton acceptor is the Asp-128. Lys-155 contributes to the ADP binding site. Residues Arg-163 and 170-172 contribute to the substrate site; that span reads MGR. ADP is bound by residues 186 to 188, Arg-212, and 214 to 216; these read GAE and KIN. Substrate is bound by residues Glu-223, Arg-244, and 250 to 253; that span reads HVQR.

The protein belongs to the phosphofructokinase type A (PFKA) family. ATP-dependent PFK group I subfamily. Prokaryotic clade 'B1' sub-subfamily. As to quaternary structure, homotetramer. Mg(2+) serves as cofactor.

It localises to the cytoplasm. It carries out the reaction beta-D-fructose 6-phosphate + ATP = beta-D-fructose 1,6-bisphosphate + ADP + H(+). The protein operates within carbohydrate degradation; glycolysis; D-glyceraldehyde 3-phosphate and glycerone phosphate from D-glucose: step 3/4. Allosterically activated by ADP and other diphosphonucleosides, and allosterically inhibited by phosphoenolpyruvate. In terms of biological role, catalyzes the phosphorylation of D-fructose 6-phosphate to fructose 1,6-bisphosphate by ATP, the first committing step of glycolysis. This is ATP-dependent 6-phosphofructokinase from Thermotoga neapolitana (strain ATCC 49049 / DSM 4359 / NBRC 107923 / NS-E).